Consider the following 141-residue polypeptide: Large ribosomal subunit protein uL11 (141 aa).

It belongs to the universal ribosomal protein uL11 family. In terms of assembly, part of the ribosomal stalk of the 50S ribosomal subunit. Interacts with L10 and the large rRNA to form the base of the stalk. L10 forms an elongated spine to which L12 dimers bind in a sequential fashion forming a multimeric L10(L12)X complex. In terms of processing, one or more lysine residues are methylated.

In terms of biological role, forms part of the ribosomal stalk which helps the ribosome interact with GTP-bound translation factors. The chain is Large ribosomal subunit protein uL11 from Exiguobacterium sibiricum (strain DSM 17290 / CCUG 55495 / CIP 109462 / JCM 13490 / 255-15).